The following is a 378-amino-acid chain: Succinyl-diaminopimelate desuccinylase (378 aa).

His-66 contacts Zn(2+). Asp-68 is an active-site residue. Asp-100 is a Zn(2+) binding site. Glu-134 (proton acceptor) is an active-site residue. Residues Glu-135, Glu-163, and His-350 each coordinate Zn(2+).

It belongs to the peptidase M20A family. DapE subfamily. Homodimer. Zn(2+) is required as a cofactor. Co(2+) serves as cofactor.

It catalyses the reaction N-succinyl-(2S,6S)-2,6-diaminopimelate + H2O = (2S,6S)-2,6-diaminopimelate + succinate. It participates in amino-acid biosynthesis; L-lysine biosynthesis via DAP pathway; LL-2,6-diaminopimelate from (S)-tetrahydrodipicolinate (succinylase route): step 3/3. In terms of biological role, catalyzes the hydrolysis of N-succinyl-L,L-diaminopimelic acid (SDAP), forming succinate and LL-2,6-diaminopimelate (DAP), an intermediate involved in the bacterial biosynthesis of lysine and meso-diaminopimelic acid, an essential component of bacterial cell walls. This Hydrogenovibrio crunogenus (strain DSM 25203 / XCL-2) (Thiomicrospira crunogena) protein is Succinyl-diaminopimelate desuccinylase.